We begin with the raw amino-acid sequence, 121 residues long: Ribosome-binding factor A (121 aa).

Belongs to the RbfA family. In terms of assembly, monomer. Binds 30S ribosomal subunits, but not 50S ribosomal subunits or 70S ribosomes.

The protein resides in the cytoplasm. One of several proteins that assist in the late maturation steps of the functional core of the 30S ribosomal subunit. Associates with free 30S ribosomal subunits (but not with 30S subunits that are part of 70S ribosomes or polysomes). Required for efficient processing of 16S rRNA. May interact with the 5'-terminal helix region of 16S rRNA. This is Ribosome-binding factor A from Brevibacillus brevis (strain 47 / JCM 6285 / NBRC 100599).